The primary structure comprises 466 residues: MRLHDTLHAAKRVFSPKNSERVGVYVCGPTVYDLAHIGNARSVVVYDVLFRLLKALYPEVIYVRNITDVDDKIINATESENKSIAELTAHYTKLFHEDIEALNCLSPTFEPRATEEIETMLHIIGRLIQAGHAYVRGGTVYFSVESYKHYGALSGRKLGDMISGSRVEVVAEKLHPGDFVLWKPATDLDMKLGACWPSPWGVGRPGWHVECSAMSYRYLGDSFDIHGGGADLMFPHHENEISQSCCAFPGSEYARYWVHNGFLTVNGGEKMSKSLGNVITVRGLLSNGVDGEVIRYVFLSTHYRKPLDWGDKAVLDAKEALNKIYRSCEGFSAQLLSTGLEDVGVHDAVMASLRDDMNTPAAIAALHELVKEINKTNNAGEKLRLARVLNKSAMLMGMFRNFPERKLLDMRGLVDEGEINRLIEKRVEAKKCGDFKLADEIRESLSNMGIGISDGKDGSTRWHRKN.

Position 27 (cysteine 27) interacts with Zn(2+). The 'HIGH' region motif lies at 29–39 (PTVYDLAHIGN). Positions 211, 236, and 240 each coordinate Zn(2+). Positions 270 to 274 (KMSKS) match the 'KMSKS' region motif. Lysine 273 contacts ATP.

This sequence belongs to the class-I aminoacyl-tRNA synthetase family. In terms of assembly, monomer. Zn(2+) is required as a cofactor.

The protein resides in the cytoplasm. The catalysed reaction is tRNA(Cys) + L-cysteine + ATP = L-cysteinyl-tRNA(Cys) + AMP + diphosphate. The sequence is that of Cysteine--tRNA ligase from Anaplasma marginale (strain St. Maries).